We begin with the raw amino-acid sequence, 129 residues long: Small ribosomal subunit protein uS11 (129 aa).

It belongs to the universal ribosomal protein uS11 family. As to quaternary structure, part of the 30S ribosomal subunit. Interacts with proteins S7 and S18. Binds to IF-3.

Located on the platform of the 30S subunit, it bridges several disparate RNA helices of the 16S rRNA. Forms part of the Shine-Dalgarno cleft in the 70S ribosome. This Paracoccus denitrificans (strain Pd 1222) protein is Small ribosomal subunit protein uS11.